We begin with the raw amino-acid sequence, 86 residues long: Protein Tat (86 aa).

Residues 1 to 21 form a disordered region; that stretch reads MDPVDPNIEPWNHPGSQPKTA. The interaction with human CREBBP stretch occupies residues 1-24; that stretch reads MDPVDPNIEPWNHPGSQPKTACNR. Residues 1–48 form a transactivation region; that stretch reads MDPVDPNIEPWNHPGSQPKTACNRCHCKKCCYHCQVCFITKGLGISYG. Residues Cys-22, Cys-25, and Cys-27 each coordinate Zn(2+). The tract at residues 22 to 37 is cysteine-rich; it reads CNRCHCKKCCYHCQVC. N6-acetyllysine; by host PCAF is present on Lys-28. Cys-30, His-33, Cys-34, and Cys-37 together coordinate Zn(2+). Positions 38 to 48 are core; the sequence is FITKGLGISYG. Residues 47 to 86 form a disordered region; that stretch reads YGRKKRRQRRRPSQGGQTHQDPIPKQPSSQPRGDPTGPKE. The segment covering 48-58 has biased composition (basic residues); the sequence is GRKKRRQRRRP. Residues 49–57 carry the Nuclear localization signal, RNA-binding (TAR), and protein transduction motif; that stretch reads RKKRRQRRR. Residues 49–86 are interaction with the host capping enzyme RNGTT; it reads RKKRRQRRRPSQGGQTHQDPIPKQPSSQPRGDPTGPKE. N6-acetyllysine; by host EP300 and GCN5L2 occurs at positions 50 and 51. An asymmetric dimethylarginine; by host PRMT6 mark is found at Arg-52 and Arg-53. The span at 60–77 shows a compositional bias: polar residues; sequence QGGQTHQDPIPKQPSSQP. A Glycyl lysine isopeptide (Lys-Gly) (interchain with G-Cter in ubiquitin) cross-link involves residue Lys-71. The Cell attachment site motif lies at 78–80; the sequence is RGD.

It belongs to the lentiviruses Tat family. Interacts with host CCNT1. Associates with the P-TEFb complex composed at least of Tat, P-TEFb (CDK9 and CCNT1), TAR RNA, RNA Pol II. Recruits the HATs CREBBP, TAF1/TFIID, EP300, PCAF and GCN5L2. Interacts with host KAT5/Tip60; this interaction targets the latter to degradation. Interacts with the host deacetylase SIRT1. Interacts with host capping enzyme RNGTT; this interaction stimulates RNGTT. Binds to host KDR, and to the host integrins ITGAV/ITGB3 and ITGA5/ITGB1. Interacts with host KPNB1/importin beta-1 without previous binding to KPNA1/importin alpha-1. Interacts with EIF2AK2. Interacts with host nucleosome assembly protein NAP1L1; this interaction may be required for the transport of Tat within the nucleus, since the two proteins interact at the nuclear rim. Interacts with host C1QBP/SF2P32; this interaction involves lysine-acetylated Tat. Interacts with the host chemokine receptors CCR2, CCR3 and CXCR4. Interacts with host DPP4/CD26; this interaction may trigger an anti-proliferative effect. Interacts with host LDLR. Interacts with the host extracellular matrix metalloproteinase MMP1. Interacts with host PRMT6; this interaction mediates Tat's methylation. Interacts with, and is ubiquitinated by MDM2/Hdm2. Interacts with host PSMC3 and HTATIP2. Interacts with STAB1; this interaction may overcome SATB1-mediated repression of IL2 and IL2RA (interleukin) in T cells by binding to the same domain than HDAC1. Interacts (when acetylated) with human CDK13, thereby increasing HIV-1 mRNA splicing and promoting the production of the doubly spliced HIV-1 protein Nef. Interacts with host TBP; this interaction modulates the activity of transcriptional pre-initiation complex. Interacts with host RELA. Interacts with host PLSCR1; this interaction negatively regulates Tat transactivation activity by altering its subcellular distribution. Asymmetrical arginine methylation by host PRMT6 seems to diminish the transactivation capacity of Tat and affects the interaction with host CCNT1. Post-translationally, acetylation by EP300, CREBBP, GCN5L2/GCN5 and PCAF regulates the transactivation activity of Tat. EP300-mediated acetylation of Lys-50 promotes dissociation of Tat from the TAR RNA through the competitive binding to PCAF's bromodomain. In addition, the non-acetylated Tat's N-terminus can also interact with PCAF. PCAF-mediated acetylation of Lys-28 enhances Tat's binding to CCNT1. Lys-50 is deacetylated by SIRT1. In terms of processing, polyubiquitination by host MDM2 does not target Tat to degradation, but activates its transactivation function and fosters interaction with CCNT1 and TAR RNA. Phosphorylated by EIF2AK2 on serine and threonine residues adjacent to the basic region important for TAR RNA binding and function. Phosphorylation of Tat by EIF2AK2 is dependent on the prior activation of EIF2AK2 by dsRNA.

The protein localises to the host nucleus. It is found in the host nucleolus. It localises to the host cytoplasm. Its subcellular location is the secreted. In terms of biological role, transcriptional activator that increases RNA Pol II processivity, thereby increasing the level of full-length viral transcripts. Recognizes a hairpin structure at the 5'-LTR of the nascent viral mRNAs referred to as the transactivation responsive RNA element (TAR) and recruits the cyclin T1-CDK9 complex (P-TEFb complex) that will in turn hyperphosphorylate the RNA polymerase II to allow efficient elongation. The CDK9 component of P-TEFb and other Tat-activated kinases hyperphosphorylate the C-terminus of RNA Pol II that becomes stabilized and much more processive. Other factors such as HTATSF1/Tat-SF1, SUPT5H/SPT5, and HTATIP2 are also important for Tat's function. Besides its effect on RNA Pol II processivity, Tat induces chromatin remodeling of proviral genes by recruiting the histone acetyltransferases (HATs) CREBBP, EP300 and PCAF to the chromatin. This also contributes to the increase in proviral transcription rate, especially when the provirus integrates in transcriptionally silent region of the host genome. To ensure maximal activation of the LTR, Tat mediates nuclear translocation of NF-kappa-B by interacting with host RELA. Through its interaction with host TBP, Tat may also modulate transcription initiation. Tat can reactivate a latently infected cell by penetrating in it and transactivating its LTR promoter. In the cytoplasm, Tat is thought to act as a translational activator of HIV-1 mRNAs. Extracellular circulating Tat can be endocytosed by surrounding uninfected cells via the binding to several surface receptors such as CD26, CXCR4, heparan sulfate proteoglycans (HSPG) or LDLR. Neurons are rarely infected, but they internalize Tat via their LDLR. Through its interaction with nuclear HATs, Tat is potentially able to control the acetylation-dependent cellular gene expression. Modulates the expression of many cellular genes involved in cell survival, proliferation or in coding for cytokines or cytokine receptors. Tat plays a role in T-cell and neurons apoptosis. Tat induced neurotoxicity and apoptosis probably contribute to neuroAIDS. Circulating Tat also acts as a chemokine-like and/or growth factor-like molecule that binds to specific receptors on the surface of the cells, affecting many cellular pathways. In the vascular system, Tat binds to ITGAV/ITGB3 and ITGA5/ITGB1 integrins dimers at the surface of endothelial cells and competes with bFGF for heparin-binding sites, leading to an excess of soluble bFGF. The polypeptide is Protein Tat (Human immunodeficiency virus type 1 group M subtype D (isolate Z2/CDC-Z34) (HIV-1)).